The following is a 366-amino-acid chain: MAPTAASAAAGEEQQAVGLAARDSSGHLSPFAISRRSTGDDDVAIKILFCGICHSDLHCIKNEWKHSIYPLVPGHEIAGVVTEVGKNVTRFKAGDRVGVGCMVNSCRSCESCNNGFENHCPEGVFTYNSVDKDGTVTYGGYSSMVVVHERFVVMFPEAMPLDVGAPLLCAGITVYTPMKYHGLNAPGKHVGVLGLGGLGHVAVKFARAFGLKVTVISSSPGKKREALERLGADAFVVSSSAEEMEAARSTMDGVINTVSANTPMAPYLALLKPNGKMILVGLPENPLEVPPFSLVHGNRTLAGSNIGGMADTQEMIELAAKHGVTADIEVIGADDVNTAMERLAKADVRYRFVIDVGNTLHAAAAE.

C53 is a binding site for Zn(2+). An NADP(+)-binding site is contributed by S55. The Zn(2+) site is built by H75, E76, C106, C109, C112, C120, and C169. Residues T173, 194 to 199 (GLGGLG), 217 to 222 (SSSPGK), T257, G281, and 304 to 306 (SNI) each bind NADP(+).

It belongs to the zinc-containing alcohol dehydrogenase family. In terms of assembly, homodimer. Zn(2+) serves as cofactor.

It catalyses the reaction (E)-cinnamyl alcohol + NADP(+) = (E)-cinnamaldehyde + NADPH + H(+). The enzyme catalyses (E)-coniferol + NADP(+) = (E)-coniferaldehyde + NADPH + H(+). The catalysed reaction is (E)-sinapyl alcohol + NADP(+) = (E)-sinapaldehyde + NADPH + H(+). It carries out the reaction (E)-4-coumaroyl alcohol + NADP(+) = (E)-4-coumaraldehyde + NADPH + H(+). It catalyses the reaction (E)-caffeyl alcohol + NADP(+) = (E)-caffeyl aldehyde + NADPH + H(+). It participates in aromatic compound metabolism; phenylpropanoid biosynthesis. Functionally, involved in lignin biosynthesis. Catalyzes the final step specific for the production of lignin monomers. Catalyzes the NADPH-dependent reduction of coniferaldehyde, 5-hydroxyconiferaldehyde, sinapaldehyde, 4-coumaraldehyde and caffeyl aldehyde to their respective alcohols. This is Probable cinnamyl alcohol dehydrogenase 3 from Oryza sativa subsp. japonica (Rice).